A 699-amino-acid polypeptide reads, in one-letter code: MPDLLLELFSEEIPARMQAKAADDLRRMVTDKLVAEGLVYEGAKAFATPRRLALTVHGIPARQPDLKTERRGPKMGAPDAAVQGFLKATGLKSLDEAKIQRDPKGDFYIALIEKPGRDAIDVLAEILPVIIRTFPWPKSMRWGARSGKPGSLNWVRPLHAITATFGLETEEPDVVKFAVDGIEAGQTTYGHRFLAPAAINVRRFEDYEAKLLDAKVVLDPERRKDAILTDAKQLAFAQGFDLVEDQNLLDEVAGLVEWPVVLMGSFEEEFLATPAEVIRATIRNNQKCFVVSDAKTGKLANKFILVANIEATDGGKTIIAGNERVIRARLSDAKFFYETDLKTKLEDRLPKFEQIVFHEELGTQAARITRIERLAAEIAPLVGADVAKTARAAHLAKADLLTEVVGEFPEVQGLMGKYYALAQGEDASVAAACEEHYKPQGPADRVPTDPVSVAVALADKLDTLVGFWAIDEKPTGSKDPYALRRAALGVIRLIAENTLRLSLMKVAASALAGLSVKPADVQKLPGDLLTFFADRLKVQLREQGARHDLVDAVFALGGQDDLLMIVRRVDALGKFLESDDGKNLLAGTKRASNILSIEEKKDKRTFDGAPDAALYSLGEEKALAKAISEVQAEASASVAKEDFAAAMSAMAKLRPPVDAFFDKVRVNDDDPKVRENRLKLLNEIRSATRAVADFSKIQD.

This sequence belongs to the class-II aminoacyl-tRNA synthetase family. As to quaternary structure, tetramer of two alpha and two beta subunits.

The protein resides in the cytoplasm. The enzyme catalyses tRNA(Gly) + glycine + ATP = glycyl-tRNA(Gly) + AMP + diphosphate. In Bradyrhizobium diazoefficiens (strain JCM 10833 / BCRC 13528 / IAM 13628 / NBRC 14792 / USDA 110), this protein is Glycine--tRNA ligase beta subunit.